A 276-amino-acid polypeptide reads, in one-letter code: Phosphonates import ATP-binding protein PhnC (276 aa).

One can recognise an ABC transporter domain in the interval 2–246 (LEIHNLQKSY…VLTRIYGAED (245 aa)). Residue 35 to 42 (GPSGAGKS) coordinates ATP.

This sequence belongs to the ABC transporter superfamily. Phosphonates importer (TC 3.A.1.9.1) family. As to quaternary structure, the complex is composed of two ATP-binding proteins (PhnC), two transmembrane proteins (PhnE) and a solute-binding protein (PhnD).

The protein localises to the cell inner membrane. It catalyses the reaction phosphonate(out) + ATP + H2O = phosphonate(in) + ADP + phosphate + H(+). Its function is as follows. Part of the ABC transporter complex PhnCDE involved in phosphonates import. Responsible for energy coupling to the transport system. This is Phosphonates import ATP-binding protein PhnC from Alcaligenes faecalis.